The chain runs to 1032 residues: Vacuolar membrane protease (1032 aa).

Residues 1–11 (MKLGNPFVFRP) lie on the Cytoplasmic side of the membrane. The helical transmembrane segment at 12–32 (GPVSFWTTIVYLAIIIPLIYV) threads the bilayer. Topologically, residues 33–415 (QETVPPAPSE…SAFALRGLFA (383 aa)) are vacuolar. N-linked (GlcNAc...) asparagine glycosylation is found at Asn50, Asn138, and Asn147. Residues His194 and Asp206 each contribute to the Zn(2+) site. Glu240 serves as the catalytic Proton acceptor. Positions 241, 266, and 339 each coordinate Zn(2+). A helical transmembrane segment spans residues 416 to 436 (WTLTLLITTPLVLFVVTYLLV). Residues 437 to 469 (RDDKWYFFATKVDSTVGDGEETVSFGGWKGFVR) are Cytoplasmic-facing. The chain crosses the membrane as a helical span at residues 470–490 (FPFALVVATALTIGSVFLLAK). Over 491 to 493 (VNP) the chain is Vacuolar. The chain crosses the membrane as a helical span at residues 494–514 (LIIYSSGYSVWAMMISLFYFV). The Cytoplasmic segment spans residues 515-532 (SWLLLRGAHFVRPSALQR). A helical transmembrane segment spans residues 533 to 553 (GFTLIWLFIITWVLSVFAAVA). Topologically, residues 554-560 (EDRMNMG) are vacuolar. Residues 561 to 581 (AVYPLAFLHTFAFAAVLISLL) form a helical membrane-spanning segment. Over 582 to 701 (EQYALPAKQD…WSGRLPTWTW (120 aa)) the chain is Cytoplasmic. Positions 595 to 688 (QVSGENEEEE…RKRSFPPYEN (94 aa)) are disordered. Positions 599 to 608 (ENEEEEEQEQ) are enriched in acidic residues. A compositionally biased stretch (polar residues) spans 651–660 (SSEQTTTFAN). Residues 702 to 722 (FIQLLLLVPLYVTVLGNLALV) traverse the membrane as a helical segment. Residues 723 to 738 (QTTSIGKTGTDGSSLL) are Vacuolar-facing. A helical membrane pass occupies residues 739 to 759 (APLMGVGILAILLLLPLTPFI). At 760–766 (HRVSHHV) the chain is on the cytoplasmic side. The chain crosses the membrane as a helical span at residues 767–787 (PLFLFLVFIGTLIYNLTAFPF). The Vacuolar portion of the chain corresponds to 788–1032 (SDNNRFKFYF…VEITKKIKVA (245 aa)). Asn940 carries N-linked (GlcNAc...) asparagine glycosylation.

It belongs to the peptidase M28 family. Requires Zn(2+) as cofactor.

Its subcellular location is the vacuole membrane. Its function is as follows. May be involved in vacuolar sorting and osmoregulation. This chain is Vacuolar membrane protease, found in Metarhizium robertsii (strain ARSEF 23 / ATCC MYA-3075) (Metarhizium anisopliae (strain ARSEF 23)).